Reading from the N-terminus, the 256-residue chain is MLMIISPAKTLDYESPLATETHTQPDFLDDACELIDQLKELEPHQVSNLMSISDKLGQLNAERFQTWHTPFTPDNARQAVLAFKGDVYTGLDAESFSNEDFSFAQKHLRILSGLYGLLKPLDLMQPYRLEMGTRFENTRGKDLYAFWGSKITEALNQLLASDDKVLVNLASNEYFKSVQKKHLDARLVTPQFKDWKNGQYKMISFYAKKARGLMCRYAIQNRITQADDLKGFNLDGYYFSEDQSDNNNWVFLRDEQ.

This sequence belongs to the UPF0246 family.

This Marinobacter nauticus (strain ATCC 700491 / DSM 11845 / VT8) (Marinobacter aquaeolei) protein is UPF0246 protein Maqu_2499.